Consider the following 280-residue polypeptide: Fructose-1,6-bisphosphatase class 1 (280 aa).

4 residues coordinate Mg(2+): glutamate 64, aspartate 83, leucine 85, and aspartate 86. Residues 86–89 (DGSS), tyrosine 189, and lysine 220 each bind substrate. Glutamate 226 is a Mg(2+) binding site.

Belongs to the FBPase class 1 family. Homotetramer. Mg(2+) serves as cofactor.

It localises to the cytoplasm. The enzyme catalyses beta-D-fructose 1,6-bisphosphate + H2O = beta-D-fructose 6-phosphate + phosphate. The protein operates within carbohydrate biosynthesis; gluconeogenesis. The polypeptide is Fructose-1,6-bisphosphatase class 1 (Campylobacter jejuni subsp. jejuni serotype O:6 (strain 81116 / NCTC 11828)).